We begin with the raw amino-acid sequence, 139 residues long: Membrane protein YqfB (139 aa).

A helical transmembrane segment spans residues 3–23 (DLLTNPLIIAAIIGIISAIFG). The disordered stretch occupies residues 25-87 (KSKEEKQNSQ…TARNLKGLER (63 aa)). A coiled-coil region spans residues 62–97 (NRMEQARREAEERRRETARNLKGLERDLAAAKQKTV). The span at 65 to 87 (EQARREAEERRRETARNLKGLER) shows a compositional bias: basic and acidic residues.

It is found in the cell membrane. This chain is Membrane protein YqfB (yqfB), found in Bacillus subtilis (strain 168).